The following is a 311-amino-acid chain: Porphobilinogen deaminase (311 aa).

Cys242 carries the post-translational modification S-(dipyrrolylmethanemethyl)cysteine.

This sequence belongs to the HMBS family. Monomer. Dipyrromethane serves as cofactor.

The catalysed reaction is 4 porphobilinogen + H2O = hydroxymethylbilane + 4 NH4(+). It functions in the pathway porphyrin-containing compound metabolism; protoporphyrin-IX biosynthesis; coproporphyrinogen-III from 5-aminolevulinate: step 2/4. Its function is as follows. Tetrapolymerization of the monopyrrole PBG into the hydroxymethylbilane pre-uroporphyrinogen in several discrete steps. This Hahella chejuensis (strain KCTC 2396) protein is Porphobilinogen deaminase.